The sequence spans 160 residues: Eukaryotic translation initiation factor 5A-4 (160 aa).

The span at 1–12 shows a compositional bias: basic and acidic residues; sequence MSDEEHHFESKA. Positions 1–21 are disordered; it reads MSDEEHHFESKADAGASKTYP. Residue Lys-52 is modified to Hypusine.

This sequence belongs to the eIF-5A family. Lys-52 undergoes hypusination, a unique post-translational modification that consists in the addition of a butylamino group from spermidine to lysine side chain, leading to the formation of the unusual amino acid hypusine. eIF-5As are the only known proteins to undergo this modification, which is essential for their function.

Its function is as follows. Translation factor that promotes translation elongation and termination, particularly upon ribosome stalling at specific amino acid sequence contexts. Binds between the exit (E) and peptidyl (P) site of the ribosome and promotes rescue of stalled ribosome: specifically required for efficient translation of polyproline-containing peptides as well as other motifs that stall the ribosome. Acts as a ribosome quality control (RQC) cofactor by joining the RQC complex to facilitate peptidyl transfer during CAT tailing step. The sequence is that of Eukaryotic translation initiation factor 5A-4 from Solanum lycopersicum (Tomato).